The primary structure comprises 169 residues: Ribosome maturation factor RimM (169 aa).

The 75-residue stretch at 93–167 folds into the PRC barrel domain; the sequence is PENSFFISDI…KISVILPKGL (75 aa).

The protein belongs to the RimM family. As to quaternary structure, binds ribosomal protein uS19.

The protein resides in the cytoplasm. In terms of biological role, an accessory protein needed during the final step in the assembly of 30S ribosomal subunit, possibly for assembly of the head region. Essential for efficient processing of 16S rRNA. May be needed both before and after RbfA during the maturation of 16S rRNA. It has affinity for free ribosomal 30S subunits but not for 70S ribosomes. The sequence is that of Ribosome maturation factor RimM from Ruminiclostridium cellulolyticum (strain ATCC 35319 / DSM 5812 / JCM 6584 / H10) (Clostridium cellulolyticum).